We begin with the raw amino-acid sequence, 198 residues long: Putative Do-like 15 protein (198 aa).

The segment at 48–198 (KIFSFSREPN…VFENDSPSDK (151 aa)) is serine protease. Residues His86 and Ser175 each act as charge relay system in the active site.

Belongs to the peptidase S1B family.

This Arabidopsis thaliana (Mouse-ear cress) protein is Putative Do-like 15 protein (DEGP15).